The primary structure comprises 635 residues: Glycosyltransferase-like protein gnt13 (635 aa).

Over 1-18 (MNINTLIINFNKVKRMKN) the chain is Cytoplasmic. The chain crosses the membrane as a helical; Signal-anchor for type II membrane protein span at residues 19–38 (FLILTLLVVMVVVFLQGPTL). At 39–635 (MINNSGQGMG…PNECFSDHHW (597 aa)) the chain is on the extracellular side. Residues asparagine 41 and asparagine 179 are each glycosylated (N-linked (GlcNAc...) asparagine). 2 disordered regions span residues 300–358 (NINN…NNID) and 389–458 (NIDN…NNEP). A compositionally biased stretch (low complexity) spans 389–456 (NIDNNNSNYN…NNNNNNNNNN (68 aa)). Asparagine 393 and asparagine 535 each carry an N-linked (GlcNAc...) asparagine glycan.

It belongs to the glycosyltransferase 8 family. Highly divergent.

The protein localises to the membrane. The sequence is that of Glycosyltransferase-like protein gnt13 (gnt13) from Dictyostelium discoideum (Social amoeba).